The primary structure comprises 1192 residues: Reticulon-4 (1192 aa).

Met-1 carries the N-acetylmethionine modification. Residues 1-204 (MEDLDQSPLV…ASEPVIRSSA (204 aa)) form a disordered region. Residues 1–1018 (MEDLDQSPLV…LYWRDIKKTG (1018 aa)) are Cytoplasmic-facing. Phosphoserine is present on residues Ser-7 and Ser-15. Residues 31–53 (PEDEEEEEEEEEEDEDEDLEELE) show a composition bias toward acidic residues. Positions 65–77 (AAPVPTAPAAGAP) are enriched in low complexity. The segment covering 87–101 (PPAPRGPLPAAPPVA) has biased composition (pro residues). Residue Ser-107 is modified to Phosphoserine. Low complexity predominate over residues 110–132 (PSPVSSTVPAPSPLSAAAVSPSK). Over residues 141–150 (ARPPPPPPAS) the composition is skewed to pro residues. Position 152 is a phosphoserine (Ser-152). Positions 159–173 (WTPPAPAPAAPPSTP) are enriched in pro residues. 5 positions are modified to phosphoserine: Ser-181, Ser-182, Ser-184, Ser-361, and Ser-446. The tract at residues 427 to 458 (DSLEQTNHEKDSESSNDDTSFPSTPEGIKDRS) is disordered. Phosphothreonine is present on Thr-450. Ser-511 carries the post-translational modification Phosphoserine. Positions 722–734 (AKVEQPVPDHSEL) are enriched in basic and acidic residues. Residues 722-762 (AKVEQPVPDHSELVEDSSPDSEPVDLFSDDSIPDVPQKQDE) form a disordered region. Over residues 735-753 (VEDSSPDSEPVDLFSDDSI) the composition is skewed to acidic residues. Residue Ser-749 is modified to Phosphoserine. Phosphothreonine is present on Thr-858. A phosphoserine mark is found at Ser-881 and Ser-991. Positions 1005–1192 (VVDLLYWRDI…KIPGLKRKAE (188 aa)) constitute a Reticulon domain. Residues 1019 to 1039 (VVFGASLFLLLSLTVFSIVSV) traverse the membrane as a helical segment. At 1040-1133 (TAYIALALLS…LMWVFTYVGA (94 aa)) the chain is on the lumenal side. At Lys-1104 the chain carries N6-acetyllysine. Residues 1134–1154 (LFNGLTLLILALISLFSVPVI) form a helical membrane-spanning segment. The Cytoplasmic portion of the chain corresponds to 1155-1192 (YERHQAQIDHYLGLANKNVKDAMAKIQAKIPGLKRKAE).

In terms of assembly, binds to RTN4R. Interacts with ATL1. Interacts with TMEM170A. Interacts with RTN4IP1. Interacts in trans with CNTNAP1. Interacts with REEP5. Interacts with synaptic plasticity regulator PANTS; the interaction results in enhanced RTN4-mediated inhibition of AMPA receptor clustering. Interacts with GPR50. As to quaternary structure, homodimer. Interacts with BAD/Bcl-xl and BCL2. Interact with RTN3. Interacts with NGBR. Interacts with SPTLC1. Interacts with GRAMD4. Interacts with CDH5. Interacts with BACE1 and BACE2. Interacts with REEP5. Interacts with RETREG3. In terms of assembly, interacts with BACE1 and BACE2. Interacts with TMEM33. In terms of tissue distribution, isoform A: is specifically expressed in brain and testis and weakly in heart and skeletal muscle. Isoform B: widely expressed except for the liver. Highly expressed in endothelial cells and vascular smooth muscle cells, including blood vessels and mesenteric arteries. Isoform C: is expressed in brain, skeletal muscle and adipocytes. Isoform D is testis-specific.

Its subcellular location is the endoplasmic reticulum membrane. It localises to the cell membrane. The protein resides in the synapse. It is found in the cell junction. Its function is as follows. Required to induce the formation and stabilization of endoplasmic reticulum (ER) tubules. They regulate membrane morphogenesis in the ER by promoting tubular ER production. They influence nuclear envelope expansion, nuclear pore complex formation and proper localization of inner nuclear membrane proteins. However each isoform have specific functions mainly depending on their tissue expression specificities. Functionally, developmental neurite growth regulatory factor with a role as a negative regulator of axon-axon adhesion and growth, and as a facilitator of neurite branching. Regulates neurite fasciculation, branching and extension in the developing nervous system. Involved in down-regulation of growth, stabilization of wiring and restriction of plasticity in the adult CNS. Regulates the radial migration of cortical neurons via an RTN4R-LINGO1 containing receptor complex. Acts as a negative regulator of central nervous system angiogenesis. Inhibits spreading, migration and sprouting of primary brain microvascular endothelial cells (MVECs). Also induces the retraction of MVECs lamellipodia and filopodia in a ROCK pathway-dependent manner. In terms of biological role, mainly function in endothelial cells and vascular smooth muscle cells, is also involved in immune system regulation. Modulator of vascular remodeling, promotes the migration of endothelial cells but inhibits the migration of vascular smooth muscle cells. Regulates endothelial sphingolipid biosynthesis with direct effects on vascular function and blood pressure. Inhibits serine palmitoyltransferase, SPTLC1, the rate-limiting enzyme of the novo sphingolipid biosynthetic pathway, thereby controlling production of endothelial sphingosine-1-phosphate (S1P). Required to promote macrophage homing and functions such as cytokine/chemokine gene expression involved in angiogenesis, arteriogenesis and tissue repair. Mediates ICAM1 induced transendothelial migration of leukocytes such as monocytes and neutrophils and acute inflammation. Necessary for immune responses triggered by nucleic acid sensing TLRs, such as TLR9, is required for proper TLR9 location to endolysosomes. Also involved in immune response to LPS. Plays a role in liver regeneration through the modulation of hepatocytes proliferation. Reduces the anti-apoptotic activity of Bcl-xl and Bcl-2. This is likely consecutive to their change in subcellular location, from the mitochondria to the endoplasmic reticulum, after binding and sequestration. With isoform C, inhibits BACE1 activity and amyloid precursor protein processing. Regulates cardiomyocyte apoptosis upon hypoxic conditions. With isoform B, inhibits BACE1 activity and amyloid precursor protein processing. The sequence is that of Reticulon-4 from Homo sapiens (Human).